Here is a 69-residue protein sequence, read N- to C-terminus: Arabinogalactan protein 24 (69 aa).

An N-terminal signal peptide occupies residues Met-1–Ala-25. 4-hydroxyproline occurs at positions 34, 36, 38, and 40. 4 O-linked (Ara...) hydroxyproline glycosylation sites follow: Pro-34, Pro-36, Pro-38, and Pro-40. The GPI-anchor amidated serine moiety is linked to residue Ser-42. Positions Ser-43 to His-69 are cleaved as a propeptide — removed in mature form.

It belongs to the AG-peptide AGP family. Post-translationally, contains 4-hydroxyproline; hydroxylated on Pro-34, Pro-36, Pro-38 and Pro-40. In terms of processing, O-glycosylated on hydroxyprolines; noncontiguous hydroxylproline residues are glycosylated with arabinogalactan.

The protein localises to the cell membrane. In terms of biological role, proteoglycan that seems to be implicated in diverse developmental roles such as differentiation, cell-cell recognition, embryogenesis and programmed cell death. The sequence is that of Arabinogalactan protein 24 from Arabidopsis thaliana (Mouse-ear cress).